A 55-amino-acid polypeptide reads, in one-letter code: Glycine-rich antimicrobial peptide Pg-AMP (55 aa).

Gly residues predominate over residues glycine 18–valine 39. The segment at glycine 18–arginine 55 is disordered. A compositionally biased stretch (basic and acidic residues) spans glutamate 44–arginine 55.

As to quaternary structure, monomer and homodimer. Might act by homodimer formation.

Has antibacterial activity against the Gram-negative bacteria Klebsiella sp., Proteus sp., E.coli ATCC 8739 (MIC=72 ug/ml) and K.pneumoniae (MIC=32 ug/ml). Has no activity against the Gram-negative bacterium S.typhimurium or the Gram-positive bacterium S.aureus. Does not have antifungal activity against the human and plant pathogenic fungi F.oxysporum, A.fumigatus and R.solani. This Psidium guajava (Guava) protein is Glycine-rich antimicrobial peptide Pg-AMP.